A 336-amino-acid chain; its full sequence is Casein kinase I isoform beta (336 aa).

Residues 17–285 (YKLVREIGFG…YLRQLFRLLF (269 aa)) enclose the Protein kinase domain. ATP-binding positions include 23-31 (IGFGSFGHV) and lysine 46. Catalysis depends on aspartate 136, which acts as the Proton acceptor. Positions 309–320 (ASSSSGEGQQAQ) are enriched in low complexity. A disordered region spans residues 309-336 (ASSSSGEGQQAQTPTGKSDNTKSEMKHS). Basic and acidic residues predominate over residues 327 to 336 (DNTKSEMKHS).

The protein belongs to the protein kinase superfamily. CK1 Ser/Thr protein kinase family. Casein kinase I subfamily. Monomer.

It localises to the cytoplasm. It catalyses the reaction L-seryl-[protein] + ATP = O-phospho-L-seryl-[protein] + ADP + H(+). It carries out the reaction L-threonyl-[protein] + ATP = O-phospho-L-threonyl-[protein] + ADP + H(+). In terms of biological role, casein kinases are operationally defined by their preferential utilization of acidic proteins such as caseins as substrates. It can phosphorylate a large number of proteins. Participates in Wnt signaling. The polypeptide is Casein kinase I isoform beta (CSNK1B) (Bos taurus (Bovine)).